The sequence spans 322 residues: Thymidylate synthase (322 aa).

DUMP contacts are provided by residues Arg25 and Arg184–Arg185. Cys204 acts as the Nucleophile in catalysis. Residues Arg224–Asp227, Asn235, and His265–Tyr267 each bind dUMP. Asp227 is a (6R)-5,10-methylene-5,6,7,8-tetrahydrofolate binding site. Ala321 is a (6R)-5,10-methylene-5,6,7,8-tetrahydrofolate binding site.

The protein belongs to the thymidylate synthase family. Bacterial-type ThyA subfamily. As to quaternary structure, homodimer.

It localises to the cytoplasm. The catalysed reaction is dUMP + (6R)-5,10-methylene-5,6,7,8-tetrahydrofolate = 7,8-dihydrofolate + dTMP. It participates in pyrimidine metabolism; dTTP biosynthesis. Functionally, catalyzes the reductive methylation of 2'-deoxyuridine-5'-monophosphate (dUMP) to 2'-deoxythymidine-5'-monophosphate (dTMP) while utilizing 5,10-methylenetetrahydrofolate (mTHF) as the methyl donor and reductant in the reaction, yielding dihydrofolate (DHF) as a by-product. This enzymatic reaction provides an intracellular de novo source of dTMP, an essential precursor for DNA biosynthesis. This Leuconostoc mesenteroides subsp. mesenteroides (strain ATCC 8293 / DSM 20343 / BCRC 11652 / CCM 1803 / JCM 6124 / NCDO 523 / NBRC 100496 / NCIMB 8023 / NCTC 12954 / NRRL B-1118 / 37Y) protein is Thymidylate synthase.